A 121-amino-acid chain; its full sequence is Natriuretic peptides B (121 aa).

The first 26 residues, methionine 1–serine 26, serve as a signal peptide directing secretion. The disordered stretch occupies residues leucine 61–glutamine 89. A compositionally biased stretch (polar residues) spans serine 77–glutamine 89. Cysteine 99 and cysteine 115 are disulfide-bonded.

This sequence belongs to the natriuretic peptide family. The precursor molecule is proteolytically cleaved by the endoprotease Furin to produce brain natriuretic peptide 45. May undergo further proteolytic cleavage by various proteases such as DPP4, MME and possibly FAP, to give rise to a variety of shorter peptides. May be cleaved at Ser-91 by the prolyl endopeptidase FAP (seprase) activity (in vitro). May be degraded by IDE. During IDE degradation, the resulting products initially increase the activation of NPR1 and can also stimulate NPR2 to produce cGMP before the fragments are completely degraded and inactivated by IDE (in vitro). As to expression, expressed abundantly in the ventricle, and in a lesser extent in the atrium (at protein level).

It is found in the secreted. Functionally, cardiac hormone that plays a key role in mediating cardio-renal homeostasis. May also function as a paracrine antifibrotic factor in the heart. Acts by specifically binding and stimulating NPR1 to produce cGMP, which in turn activates effector proteins that drive various biological responses. Likely involved in regulating the extracellular fluid volume and maintaining the fluid-electrolyte balance through natriuresis, diuresis, kaluresis and chloruresis. The protein is Natriuretic peptides B (Nppb) of Mus musculus (Mouse).